A 152-amino-acid polypeptide reads, in one-letter code: Small ribosomal subunit protein bS6 (152 aa).

A disordered region spans residues 96-152 (HEEGPSAMLQKRDRDDRGPREGGDRGPRREFGDRPPRRDGDFQRGPRPDRAPREDRA).

The protein belongs to the bacterial ribosomal protein bS6 family.

Its function is as follows. Binds together with bS18 to 16S ribosomal RNA. This Rhizobium etli (strain CIAT 652) protein is Small ribosomal subunit protein bS6.